The chain runs to 129 residues: Small ribosomal subunit protein uS11 (129 aa).

It belongs to the universal ribosomal protein uS11 family. In terms of assembly, part of the 30S ribosomal subunit. Interacts with proteins S7 and S18. Binds to IF-3.

In terms of biological role, located on the platform of the 30S subunit, it bridges several disparate RNA helices of the 16S rRNA. Forms part of the Shine-Dalgarno cleft in the 70S ribosome. This is Small ribosomal subunit protein uS11 from Novosphingobium aromaticivorans (strain ATCC 700278 / DSM 12444 / CCUG 56034 / CIP 105152 / NBRC 16084 / F199).